Consider the following 71-residue polypeptide: Protein SlyX homolog (71 aa).

It belongs to the SlyX family.

The protein is Protein SlyX homolog of Thioalkalivibrio sulfidiphilus (strain HL-EbGR7).